The sequence spans 116 residues: Protein Rev (116 aa).

Ser5 is modified (phosphoserine; by host CK2). A homomultimerization region spans residues 18 to 26 (LIKILYQSN). Residues 23–49 (YQSNPPPSPEGTRQARRNRRRRWRARQ) are disordered. Residues 34–50 (TRQARRNRRRRWRARQR) carry the Nuclear localization signal and RNA-binding (RRE) motif. Basic residues predominate over residues 36–49 (QARRNRRRRWRARQ). Positions 73-84 (LQLPPLERLNLN) match the Nuclear export signal and binding to XPO1 motif. The segment at 86 to 116 (SEDCGTSGTQGVGSPQISVESPTVLESGTEE) is disordered. Residues Ser92 and Ser99 each carry the phosphoserine; by host modification.

The protein belongs to the HIV-1 REV protein family. As to quaternary structure, homomultimer; when bound to the RRE. Multimeric assembly is essential for activity and may involve XPO1. Binds to human KPNB1, XPO1, TNPO1, RANBP5 and IPO7. Interacts with the viral Integrase. Interacts with human KHDRBS1. Interacts with human NAP1; this interaction decreases Rev multimerization and stimulates its activity. Interacts with human DEAD-box helicases DDX3 and DDX24; these interactions may serve for viral RNA export to the cytoplasm and packaging, respectively. Interacts with human PSIP1; this interaction may inhibit HIV-1 DNA integration by promoting dissociation of the Integrase-LEDGF/p75 complex. Post-translationally, asymmetrically arginine dimethylated at one site by host PRMT6. Methylation impairs the RNA-binding activity and export of viral RNA from the nucleus to the cytoplasm. Phosphorylated by protein kinase CK2. Presence of, and maybe binding to the N-terminus of the regulatory beta subunit of CK2 is necessary for CK2-mediated Rev's phosphorylation.

Its subcellular location is the host nucleus. It is found in the host nucleolus. The protein localises to the host cytoplasm. Functionally, escorts unspliced or incompletely spliced viral pre-mRNAs (late transcripts) out of the nucleus of infected cells. These pre-mRNAs carry a recognition sequence called Rev responsive element (RRE) located in the env gene, that is not present in fully spliced viral mRNAs (early transcripts). This function is essential since most viral proteins are translated from unspliced or partially spliced pre-mRNAs which cannot exit the nucleus by the pathway used by fully processed cellular mRNAs. Rev itself is translated from a fully spliced mRNA that readily exits the nucleus. Rev's nuclear localization signal (NLS) binds directly to KPNB1/Importin beta-1 without previous binding to KPNA1/Importin alpha-1. KPNB1 binds to the GDP bound form of RAN (Ran-GDP) and targets Rev to the nucleus. In the nucleus, the conversion from Ran-GDP to Ran-GTP dissociates Rev from KPNB1 and allows Rev's binding to the RRE in viral pre-mRNAs. Rev multimerization on the RRE via cooperative assembly exposes its nuclear export signal (NES) to the surface. Rev can then form a complex with XPO1/CRM1 and Ran-GTP, leading to nuclear export of the complex. Conversion from Ran-GTP to Ran-GDP mediates dissociation of the Rev/RRE/XPO1/RAN complex, so that Rev can return to the nucleus for a subsequent round of export. Beside KPNB1, also seems to interact with TNPO1/Transportin-1, RANBP5/IPO5 and IPO7/RANBP7 for nuclear import. The nucleoporin-like HRB/RIP is an essential cofactor that probably indirectly interacts with Rev to release HIV RNAs from the perinuclear region to the cytoplasm. This Homo sapiens (Human) protein is Protein Rev.